The sequence spans 1959 residues: MAQRDADKYLYVDKNIINNPLTQADWAAKKLVWVPSEKSGFEAASLKEEVGDEAIVELAENGKKVKVNKDDIQKMNPPKFSKVEDMAELTCLNEASVLHNLKERYYSGLIYTYSGLFCVVINPYKNLPIYSEEIVEMYKGKKRHEMPPHIYAITDTAYRSMMQDREDQSILCTGESGAGKTENTKKVIQYLAHVASSHKSKKDQGELERQLLQANPILEAFGNAKTVKNDNSSRFGKFIRINFDVNGYIVGANIETYLLEKSRAIRQAKEERTFHIFYYLLSGAGEHLKTDLLLEPYNKYRFLSNGHVTIPGQQDKDMFQETMEAMRIMGIPDEEQIGLLKVISGVLQLGNIVFKKERNTDQASMPDNTAAQKVSHLLGINVTDFTRGILTPRIKVGRDYVQKAQTKEQADFAIEALAKATYEQMFRWLVMRINKALDKTKRQGASFIGILDIAGFEIFELNSFEQLCINYTNEKLQQLFNHTMFILEQEEYQNEGIEWNFIDFGLDLQPCIDLIEKPAGPPGILALLDEECWFPKATDKSFVEKVVQEQGTHPKFQKPKQLKDKADFCIIHYAGKVDYKADEWLMKNMDPLNDNIATLLHQSSDKFVSELWKDVDRIVGLDQVAGMSETALPGAFKTRKGMFRTVGQLYKEQLAKLMATLRNTNPNFVRCIIPNHEKKAGKLDPHLVLDQLRCNGVLEGIRICRQGFPNRVVFQEFRQRYEILTPNAIPKGFMDGKQACVLMIKALELDSNLYRIGQSKVFFRAGVLAHLEEERDLKITDVIIGFQACCRGYLARKAFAKRQQQLTAMKVLQRNCAAYLKLRNWQWWRLFTKVKPLLQVSRQEEEMMAKEEELIKVKEKQLAAENRLSEMETFQAQLMAEKMQLQEQLQAEAELCAEAEEIRARLTAKKQELEEICHDLEARVEEEEERCQHLQAEKKKMQQNIQELEEQLEEEESARQKLQLEKVTTEAKLKKLEEDVIVLEDQNLKLAKEKKLLEDRMSEFTTNLTEEEEKSKSLAKLKNKHEAMITDLEERLRREEKQRQELEKTRRKLEGDSSDLHDQIAELQAQIAELKIQLSKKEEELQAALARVEEEAAQKNMALKKIRELESQITELQEDLESERASRNKAEKQKRDLGEELEALKTELEDTLDSTAAQQELRSKREQEVTVLKKTLEDEAKTHEAQIQEMRQKHSQAIEELAEQLEQTKRVKANLEKAKQALESERAELSNEVKVLLQGKGDAEHKRKKVDAQLQELQVKFTEGERVKTELAERVNKLQVELDNVTGLLNQSDSKSIKLAKDFSALESQLQDTQELLQEETRLKLSFSTKLKQTEDEKNALKEQLEEEEEAKRNLEKQISVLQQQAVEARKKMDDGLGCLEIAEEAKKKLQKDLESLTQRYEEKIAAYDKLEKTKTRLQQELDDIAVDLDHQRQTVSNLEKKQKKFDQLLAEEKNISAKYAEERDRAEAEAREKETKALSLARALEEAIEQKAELERVNKQFRTEMEDLMSSKDDVGKSVHELEKAKRALEQQVEEMKTQLEELEDELQATEDAKLRLEVNQQAMKAQFDRDLLGRDEQNEEKRKQLIRQVREMEVELEDERKQRSIAVAARKKLELDLKDLESHIDTANKNRDEAIKHVRKLQAQMKDYMRELEDTRTSREEILAQAKENEKKLKSMEAEMIQLQEELAAAERAKRQAQQERDELADEIANSSGKGALAMEEKRRLEARIAQLEEELEEEQGNTEIINDRLKKANLQIDQMNADLNAERSNAQKNENARQQMERQNKELKLKLQEMESAVKSKYKATITALEAKIVQLEEQLDMETKERQAASKQVRRAEKKLKDILLQVDDERRNAEQFKDQADKANMRLKQLKRQLEEAEEEAQRANVRRKLQRELDDATETADAMNREVSSLKSKLRRGDLPFVVTRRLVRKGTGECSDEEVDGKAEAGDAKATE.

Positions 27–77 constitute a Myosin N-terminal SH3-like domain; sequence AAKKLVWVPSEKSGFEAASLKEEVGDEAIVELAENGKKVKVNKDDIQKMNP. In terms of domain architecture, Myosin motor spans 81–776; that stretch reads SKVEDMAELT…VLAHLEEERD (696 aa). Residue 174 to 181 coordinates ATP; the sequence is GESGAGKT. Positions 654 to 676 are actin-binding; that stretch reads LAKLMATLRNTNPNFVRCIIPNH. The region spanning 779–808 is the IQ domain; the sequence is ITDVIIGFQACCRGYLARKAFAKRQQQLTA. Residues 837 to 1925 adopt a coiled-coil conformation; it reads LLQVSRQEEE…LKSKLRRGDL (1089 aa). Disordered stretches follow at residues 1118-1168, 1694-1717, 1879-1917, and 1936-1959; these read EDLE…REQE, RAKR…SGKG, LEEA…SSLK, and KGTG…KATE. Basic and acidic residues-rich tracts occupy residues 1122-1148 and 1694-1704; these read SERA…KTEL and RAKRQAQQERD. Basic and acidic residues predominate over residues 1947–1959; it reads DGKAEAGDAKATE.

Belongs to the TRAFAC class myosin-kinesin ATPase superfamily. Myosin family. Myosin is a hexameric protein that consists of 2 heavy chain subunits (MHC), 2 alkali light chain subunits (MLC) and 2 regulatory light chain subunits (MLC-2). In terms of tissue distribution, expressed in fibroblasts, brain, lung, kidney, spleen, and skeletal, cardiac and smooth muscles.

It localises to the cytoplasm. The protein localises to the cytoskeleton. The protein resides in the cell cortex. It is found in the cytoplasmic vesicle. Its subcellular location is the secretory vesicle. It localises to the cortical granule. Its function is as follows. Cellular myosin that appears to play a role in cytokinesis, cell shape, and specialized functions such as secretion and capping. This Gallus gallus (Chicken) protein is Myosin-9 (MYH9).